Consider the following 258-residue polypeptide: MKKMPMRKRFGQHFLHDSFVLQKIVSAIHPQKTDTLVEIGPGRGALTDYLLTECDNLALVEIDRDLVAFLQKKYNQQKNITIYQNDALQFDFSSVKTDKPLRVVGNLPYNISTPLLFHLFSQIHCIEDMHFMLQKEVVRRITAEVGSHDYGRLSVMAKYFCDNTYLFTVSPQAFTPPPRVESAIIRLIPRHNFTPVAKNLDQLSHVVKEAFSYRRKTVGNALKKLINPSQWPLLEINPQLRPQELTVEDFVKISNILN.

Positions 13, 15, 40, 61, 86, and 106 each coordinate S-adenosyl-L-methionine.

It belongs to the class I-like SAM-binding methyltransferase superfamily. rRNA adenine N(6)-methyltransferase family. RsmA subfamily.

The protein localises to the cytoplasm. The enzyme catalyses adenosine(1518)/adenosine(1519) in 16S rRNA + 4 S-adenosyl-L-methionine = N(6)-dimethyladenosine(1518)/N(6)-dimethyladenosine(1519) in 16S rRNA + 4 S-adenosyl-L-homocysteine + 4 H(+). In terms of biological role, specifically dimethylates two adjacent adenosines (A1518 and A1519) in the loop of a conserved hairpin near the 3'-end of 16S rRNA in the 30S particle. May play a critical role in biogenesis of 30S subunits. In Coxiella burnetii (strain RSA 331 / Henzerling II), this protein is Ribosomal RNA small subunit methyltransferase A.